Here is a 201-residue protein sequence, read N- to C-terminus: Endoribonuclease YbeY (201 aa).

Positions 156, 160, and 166 each coordinate Zn(2+).

The protein belongs to the endoribonuclease YbeY family. Zn(2+) serves as cofactor.

It localises to the cytoplasm. Its function is as follows. Single strand-specific metallo-endoribonuclease involved in late-stage 70S ribosome quality control and in maturation of the 3' terminus of the 16S rRNA. This chain is Endoribonuclease YbeY, found in Cupriavidus pinatubonensis (strain JMP 134 / LMG 1197) (Cupriavidus necator (strain JMP 134)).